The chain runs to 200 residues: GTP-binding protein rho2 (200 aa).

Residue 15 to 22 (GDGACGKT) coordinates GTP. Positions 37–45 (YVPTVFENY) match the Effector region motif. GTP is bound by residues 62–66 (DTAGQ) and 120–123 (MKAD). The residue at position 197 (cysteine 197) is a Cysteine methyl ester. The S-geranylgeranyl cysteine moiety is linked to residue cysteine 197. A propeptide spans 198 to 200 (IIS) (removed in mature form).

It belongs to the small GTPase superfamily. Rho family. In terms of assembly, interacts with pck2.

Its subcellular location is the cell membrane. In terms of biological role, involved in cell morphogenesis, the maintenance of growth direction, control of polarity and of cell wall integrity. Regulates the synthesis of alpha-D-glucan through activation of pck2. The protein is GTP-binding protein rho2 (rho2) of Schizosaccharomyces pombe (strain 972 / ATCC 24843) (Fission yeast).